Consider the following 277-residue polypeptide: Bis(5'-nucleosyl)-tetraphosphatase, symmetrical (277 aa).

It belongs to the Ap4A hydrolase family.

It catalyses the reaction P(1),P(4)-bis(5'-adenosyl) tetraphosphate + H2O = 2 ADP + 2 H(+). Hydrolyzes diadenosine 5',5'''-P1,P4-tetraphosphate to yield ADP. This Bordetella pertussis (strain Tohama I / ATCC BAA-589 / NCTC 13251) protein is Bis(5'-nucleosyl)-tetraphosphatase, symmetrical.